We begin with the raw amino-acid sequence, 366 residues long: MEVYTIKEGKKLRYGYTTGSCAAAASKAATYMLFTGEKIDTVEIDTPKGWHLILDVLDVTSGEGWVKCGIRKDGGDDPDATHGLIIYSKVELKEGEGIDVYGGEGVGVVTKPGLPVNPGKPAINPVPMSMILNEVKKVLPEGKGVKITISVPGGEKVALKTFNPRLGIVGGISILGTSGIVEPMSEEALKSSLELELSILSAEGHKKVVFAPGNYGKDYAMKEGLEERLIISYGNFLGFMLEKAVEYGFTHVVLAGHIGKLVKVAAGIFNTHSHVADARAEIMAAYVAHFGADKKTVDKVLDSNTTEEALDIIEKAGVNIKDFSQFIADRVYMKCKQYVYDKLNIEVHLISLKRGIIAKAGEKVEW.

This sequence belongs to the CbiD family.

The enzyme catalyses Co-precorrin-5B + S-adenosyl-L-methionine = Co-precorrin-6A + S-adenosyl-L-homocysteine. It participates in cofactor biosynthesis; adenosylcobalamin biosynthesis; cob(II)yrinate a,c-diamide from sirohydrochlorin (anaerobic route): step 6/10. In terms of biological role, catalyzes the methylation of C-1 in cobalt-precorrin-5B to form cobalt-precorrin-6A. The polypeptide is Cobalt-precorrin-5B C(1)-methyltransferase (Thermoanaerobacter sp. (strain X514)).